The primary structure comprises 358 residues: Dual-specificity RNA methyltransferase RlmN (358 aa).

The active-site Proton acceptor is E91. The region spanning S98–D335 is the Radical SAM core domain. Cysteines 105 and 340 form a disulfide. [4Fe-4S] cluster-binding residues include C112, C116, and C119. S-adenosyl-L-methionine contacts are provided by residues G164–E165, S196, S219–H221, and N295. The active-site S-methylcysteine intermediate is the C340.

The protein belongs to the radical SAM superfamily. RlmN family. Requires [4Fe-4S] cluster as cofactor.

The protein resides in the cytoplasm. It catalyses the reaction adenosine(2503) in 23S rRNA + 2 reduced [2Fe-2S]-[ferredoxin] + 2 S-adenosyl-L-methionine = 2-methyladenosine(2503) in 23S rRNA + 5'-deoxyadenosine + L-methionine + 2 oxidized [2Fe-2S]-[ferredoxin] + S-adenosyl-L-homocysteine. The enzyme catalyses adenosine(37) in tRNA + 2 reduced [2Fe-2S]-[ferredoxin] + 2 S-adenosyl-L-methionine = 2-methyladenosine(37) in tRNA + 5'-deoxyadenosine + L-methionine + 2 oxidized [2Fe-2S]-[ferredoxin] + S-adenosyl-L-homocysteine. Specifically methylates position 2 of adenine 2503 in 23S rRNA and position 2 of adenine 37 in tRNAs. m2A2503 modification seems to play a crucial role in the proofreading step occurring at the peptidyl transferase center and thus would serve to optimize ribosomal fidelity. The chain is Dual-specificity RNA methyltransferase RlmN from Oleidesulfovibrio alaskensis (strain ATCC BAA-1058 / DSM 17464 / G20) (Desulfovibrio alaskensis).